Reading from the N-terminus, the 182-residue chain is Peptidoglycan L,D-endopeptidase MepK (182 aa).

A signal peptide (tat-type signal) is located at residues 1–30; it reads MDKFDANRRKLLALGGVALGAAILPTPAFA. Residues H133, D140, and H173 each coordinate Zn(2+).

It belongs to the peptidase M15 family. Zn(2+) serves as cofactor. Predicted to be exported by the Tat system. The position of the signal peptide cleavage has not been experimentally proven.

The protein operates within cell wall biogenesis; cell wall polysaccharide biosynthesis. Its function is as follows. L,D-endopeptidase that cleaves meso-diaminopimelic acid (mDAP)-mDAP cross-links in peptidoglycan. It works in conjunction with other elongation-specific D,D-endopeptidases to make space for efficient incorporation of nascent peptidoglycan strands into the sacculus and thus enable cell wall expansion. In Escherichia coli O157:H7, this protein is Peptidoglycan L,D-endopeptidase MepK.